The primary structure comprises 200 residues: MQLNVNDAQAIEVSELTFGGEFNETLVHQAVVAYMAGGRQGSKQQKTRSDVRGGGKRPWRQKGTGRARAGTIRSPIWRGGGTTFAARPQDHTQKLNKKMYRAALRSILAELVRTDRLVVVQDFAVEAPKTKDLLNKLTGMGLTDVLIVSDAVDQNLYLAARNLPHVDVRDVQGSDPVSLIAYDKVLITVSAVKKFEELLG.

A disordered region spans residues 38-68; sequence GRQGSKQQKTRSDVRGGGKRPWRQKGTGRAR. The segment covering 54–65 has biased composition (basic residues); the sequence is GGKRPWRQKGTG.

The protein belongs to the universal ribosomal protein uL4 family. Part of the 50S ribosomal subunit.

One of the primary rRNA binding proteins, this protein initially binds near the 5'-end of the 23S rRNA. It is important during the early stages of 50S assembly. It makes multiple contacts with different domains of the 23S rRNA in the assembled 50S subunit and ribosome. In terms of biological role, forms part of the polypeptide exit tunnel. This is Large ribosomal subunit protein uL4 from Pseudomonas syringae pv. tomato (strain ATCC BAA-871 / DC3000).